Reading from the N-terminus, the 95-residue chain is MSFKPLHDRIAIKPIEQEEKTKGGIIIPDTVKEKPMQGEVVAVGNGIRNQKGEIHPLELKVGDKVLYGKWAGTEIEIKGTKLIVMKESDVFGIIN.

It belongs to the GroES chaperonin family. As to quaternary structure, heptamer of 7 subunits arranged in a ring. Interacts with the chaperonin GroEL.

Its subcellular location is the cytoplasm. Together with the chaperonin GroEL, plays an essential role in assisting protein folding. The GroEL-GroES system forms a nano-cage that allows encapsulation of the non-native substrate proteins and provides a physical environment optimized to promote and accelerate protein folding. GroES binds to the apical surface of the GroEL ring, thereby capping the opening of the GroEL channel. This is Co-chaperonin GroES from Rickettsia rickettsii (strain Sheila Smith).